The chain runs to 712 residues: MLAGLKVKKQELANSSDVTLPDRPLSPPLTAPPTMKSAEFFEMLEKMQGIKLEEQRPGPQKNKDDYIPYPSIDEVVEKGGPYPLIILPQFGGYWIEDPENVGTPTSLGSSVYEEEEEDSLSPNTFGYKLECRGEARAYRRHFLGKDHLNFYCTGSSLGNLILSIKCEEAEGMEYLRIILRSKLKTVHERIPLAGLSKLPSVPQIAKAFCDDAVGLKFNPVLYPKASQMIVSYDEHDVNNTFKFGVIYQKARQTLEEELFGNNEESPAFKEFLDLLGDTITLQDFKGFRGGLDVTHGQTGVESVYTTFRDREIMFHVSTKLPFTDGDTQQLQRKRHIGNDIVAIIFQEENTPFVPDMIASNFLHAYIVVQADNPGTETPSYKVSVTAREDVPAFGPPLPSPPVFQKGAEFREFLLTKLTNAENACCKSDKFAKLEDRTRAALLDNLHDELHTHTQVMLGMGPEEDKFENGGHGGFLESFKRAIRVRSHSMETMVGSQRKLHGGNLPGSLSGGIVHNSMEVTKTTFSPPVAAATAKNQSRSPIKRRSGLFPRLHSGSEGQGDSRTRCDSASSTPKTPDGGHSSQEIKSETSSNPSSPEICPNKEKPFIKLKENGRANISRSSSSTSSFSSTAGEGEAMEECDSGSSQPSTTSPFKQEVFAYSPSPSSESPSLGAAATPIIMSRSPTDAKSRNSPRSNLKFRFDKLSHASSSAGH.

Positions M1–P33 are disordered. The residue at position 26 (S26) is a Phosphoserine. T30 is subject to Phosphothreonine. Residues I229–L445 form the Rap-GAP domain. Residues S488, S495, S525, S539, S545, S593, and S594 each carry the phosphoserine modification. The tract at residues A529–H712 is disordered. The span at D566 to S594 shows a compositional bias: polar residues. Over residues P599–G612 the composition is skewed to basic and acidic residues. Residues S617–T629 are compositionally biased toward low complexity. Over residues S641–F652 the composition is skewed to polar residues. Residues S660–S669 show a composition bias toward low complexity. Positions R681–S694 are enriched in polar residues.

Its subcellular location is the cytoplasm. Functionally, GTPase activator for the nuclear Ras-related regulatory protein RAP-1A (KREV-1), converting it to the putatively inactive GDP-bound state. The chain is Rap1 GTPase-activating protein 2 (Rap1gap2) from Mus musculus (Mouse).